A 549-amino-acid polypeptide reads, in one-letter code: CTP synthase (549 aa).

The segment at 1–267 (MAKFVFITGG…CREVLDVLNL (267 aa)) is amidoligase domain. Serine 13 contacts CTP. Serine 13 is a UTP binding site. Residues 14 to 19 (SIGKGI) and aspartate 71 each bind ATP. Mg(2+) is bound by residues aspartate 71 and glutamate 141. CTP is bound by residues 148-150 (DIE), 188-193 (KTKPTQ), and lysine 224. UTP contacts are provided by residues 188 to 193 (KTKPTQ) and lysine 224. The 243-residue stretch at 292 to 534 (KIALVGKYVQ…IEAAQQRLPD (243 aa)) folds into the Glutamine amidotransferase type-1 domain. Glycine 354 serves as a coordination point for L-glutamine. Cysteine 381 functions as the Nucleophile; for glutamine hydrolysis in the catalytic mechanism. L-glutamine-binding positions include 382–385 (LGMQ), glutamate 405, and arginine 462. Residues histidine 507 and glutamate 509 contribute to the active site.

Belongs to the CTP synthase family. In terms of assembly, homotetramer.

It catalyses the reaction UTP + L-glutamine + ATP + H2O = CTP + L-glutamate + ADP + phosphate + 2 H(+). The catalysed reaction is L-glutamine + H2O = L-glutamate + NH4(+). It carries out the reaction UTP + NH4(+) + ATP = CTP + ADP + phosphate + 2 H(+). It participates in pyrimidine metabolism; CTP biosynthesis via de novo pathway; CTP from UDP: step 2/2. Allosterically activated by GTP, when glutamine is the substrate; GTP has no effect on the reaction when ammonia is the substrate. The allosteric effector GTP functions by stabilizing the protein conformation that binds the tetrahedral intermediate(s) formed during glutamine hydrolysis. Inhibited by the product CTP, via allosteric rather than competitive inhibition. Its function is as follows. Catalyzes the ATP-dependent amination of UTP to CTP with either L-glutamine or ammonia as the source of nitrogen. Regulates intracellular CTP levels through interactions with the four ribonucleotide triphosphates. The protein is CTP synthase of Synechococcus sp. (strain CC9605).